The following is a 272-amino-acid chain: Transcription factor E2F6 (272 aa).

Residues 1-62 form a binding to corepressors region; the sequence is MSQQRTARRQ…MRKALKVKRP (62 aa). Residues 50–129 mediate DNA binding; sequence YVSMRKALKV…SKNHIRWIGS (80 aa). The short motif at 95 to 129 is the DEF box element; sequence KLGVRKRRVYDITNVLDGIELVEKKSKNHIRWIGS. The interval 130–222 is dimerization; it reads DLNNFGAAPQ…PAPREDSITV (93 aa). The interval 143-164 is leucine-zipper; sequence LQAELSDLSAMEDALDELIKDC. Positions 173–272 are transcription repression; it reads DDKENERLAY…CPEKEDEPPQ (100 aa). Positions 242-272 are disordered; that stretch reads HSNGKTNDGIGASPSKSSHPQCPEKEDEPPQ.

This sequence belongs to the E2F/DP family. Forms heterodimers with DP family members TFDP1 or TFDP2. Component of the DRTF1/E2F transcription factor complex. Part of the E2F6.com-1 complex in G0 phase composed of E2F6, MGA, MAX, TFDP1, CBX3, BAT8, EUHMTASE1, RING1, RNF2, MBLR, L3MBTL2 and YAF2. Component of some MLL1/MLL complex, at least composed of the core components KMT2A/MLL1, ASH2L, HCFC1/HCF1, WDR5 and RBBP5, as well as the facultative components BACC1, CHD8, E2F6, HSP70, INO80C, KANSL1, LAS1L, MAX, MCRS1, MGA, KAT8/MOF, PELP1, PHF20, PRP31, RING2, RUVB1/TIP49A, RUVB2/TIP49B, SENP3, TAF1, TAF4, TAF6, TAF7, TAF9 and TEX10.

It localises to the nucleus. In terms of biological role, inhibitor of E2F-dependent transcription. Binds DNA cooperatively with DP proteins through the E2 recognition site, 5'-TTTC[CG]CGC-3'. Has a preference for the 5'-TTTCCCGC-3' E2F recognition site. E2F6 lacks the transcriptional activation and pocket protein binding domains. Appears to regulate a subset of E2F-dependent genes whose products are required for entry into the cell cycle but not for normal cell cycle progression. Represses expression of some meiosis-specific genes, including SLC25A31/ANT4. May silence expression via the recruitment of a chromatin remodeling complex containing histone H3-K9 methyltransferase activity. Overexpression delays the exit of cells from the S-phase. The chain is Transcription factor E2F6 from Mus musculus (Mouse).